Consider the following 282-residue polypeptide: Bifunctional protein FolD (282 aa).

163-165 is a binding site for NADP(+); that stretch reads GRS.

Belongs to the tetrahydrofolate dehydrogenase/cyclohydrolase family. In terms of assembly, homodimer.

The catalysed reaction is (6R)-5,10-methylene-5,6,7,8-tetrahydrofolate + NADP(+) = (6R)-5,10-methenyltetrahydrofolate + NADPH. It catalyses the reaction (6R)-5,10-methenyltetrahydrofolate + H2O = (6R)-10-formyltetrahydrofolate + H(+). The protein operates within one-carbon metabolism; tetrahydrofolate interconversion. Functionally, catalyzes the oxidation of 5,10-methylenetetrahydrofolate to 5,10-methenyltetrahydrofolate and then the hydrolysis of 5,10-methenyltetrahydrofolate to 10-formyltetrahydrofolate. This chain is Bifunctional protein FolD, found in Leuconostoc citreum (strain KM20).